Here is a 372-residue protein sequence, read N- to C-terminus: 1,3,6,8-tetrahydroxynaphthalene synthase (372 aa).

The active site involves C138.

The protein belongs to the thiolase-like superfamily. Chalcone/stilbene synthases family. As to quaternary structure, homodimer.

It catalyses the reaction 5 malonyl-CoA + 5 H(+) = naphthalene-1,3,6,8-tetrol + 5 CO2 + 5 CoA + H2O. Its pathway is pigment biosynthesis; melanin biosynthesis. Involved in the biosynthesis of melanin but also various secondary metabolites containing a naphthoquinone ring. Catalyzes the iterative condensation of five CoA-linked malonyl units to form a pentaketide intermediate. THNS subsequently catalyzes the dual intramolecular Claisen and aldol condensations of this linear intermediate to produce the fused ring of 1,3,6,8-tetrahydroxynaphthalene (THN). This Streptomyces griseus protein is 1,3,6,8-tetrahydroxynaphthalene synthase.